A 38-amino-acid polypeptide reads, in one-letter code: MKVRPSVRRICEKCRVIRRHGRVMVICSSNPKHKQRQG.

It belongs to the bacterial ribosomal protein bL36 family.

The chain is Large ribosomal subunit protein bL36 from Synechococcus sp. (strain JA-2-3B'a(2-13)) (Cyanobacteria bacterium Yellowstone B-Prime).